The sequence spans 176 residues: Ribosome maturation factor RimM (176 aa).

One can recognise a PRC barrel domain in the interval 103–176; it reads QNDEYYFYEI…KIVVKELEWI (74 aa).

The protein belongs to the RimM family. As to quaternary structure, binds ribosomal protein uS19.

Its subcellular location is the cytoplasm. An accessory protein needed during the final step in the assembly of 30S ribosomal subunit, possibly for assembly of the head region. Essential for efficient processing of 16S rRNA. May be needed both before and after RbfA during the maturation of 16S rRNA. It has affinity for free ribosomal 30S subunits but not for 70S ribosomes. The polypeptide is Ribosome maturation factor RimM (Thermotoga neapolitana (strain ATCC 49049 / DSM 4359 / NBRC 107923 / NS-E)).